The sequence spans 338 residues: MQFIDEVKIHVQSGHGGAGCVSFRREKFIPFGGPDGGDGGKGGDVIFTVDPNLSTLMDLRYRPHLKAGRGKNGMGKDRHGANGDDLTIPVPPGTIVKDAETGEILADLTEPGQTVVLLKGGRGGQGNARFTTSTNRAPKFAQPGEDEEERWLRLELKLMADVGLLGFPNVGKSSFITKVSAARPKIADYPFTTIKPNLGVVSYKNYRSFVVADIPGIIEGASEGAGLGHRFLKHVERTNILLHLIDLSWIPDRDPIREYETLNRELALFSPELAGKEQIAVINKIDLPVVRENLPSVIDWFKERGIAVFPISAATGEGIPTLLDEIARHLWGQAEEEW.

Residues 1–159 (MQFIDEVKIH…RWLRLELKLM (159 aa)) enclose the Obg domain. The interval 66 to 91 (KAGRGKNGMGKDRHGANGDDLTIPVP) is disordered. The OBG-type G domain maps to 160–331 (ADVGLLGFPN…LLDEIARHLW (172 aa)). GTP-binding positions include 166–173 (GFPNVGKS), 191–195 (FTTIK), 213–216 (DIPG), 283–286 (NKID), and 312–314 (SAA). Residues Ser-173 and Thr-193 each contribute to the Mg(2+) site.

This sequence belongs to the TRAFAC class OBG-HflX-like GTPase superfamily. OBG GTPase family. Monomer. It depends on Mg(2+) as a cofactor.

It localises to the cytoplasm. Its function is as follows. An essential GTPase which binds GTP, GDP and possibly (p)ppGpp with moderate affinity, with high nucleotide exchange rates and a fairly low GTP hydrolysis rate. Plays a role in control of the cell cycle, stress response, ribosome biogenesis and in those bacteria that undergo differentiation, in morphogenesis control. In Geobacter metallireducens (strain ATCC 53774 / DSM 7210 / GS-15), this protein is GTPase Obg.